The sequence spans 694 residues: Voltage-gated chloride channel TMC4 (694 aa).

The segment at 1-21 is disordered; sequence MEAWGQSPACSSSRKARTGPS. Residues 1–150 lie on the Extracellular side of the membrane; it reads MEAWGQSPAC…GTESYFSLLR (150 aa). Residues 151–171 form a helical membrane-spanning segment; the sequence is FLLFLNLVASVIEICMKLIPT. The Cytoplasmic portion of the chain corresponds to 172–231; that stretch reads WLEGAPPGPPGPNISSPCGSYIPHTHGLVAFPTQLFNLLSGEGYLEWSPLFYGFYPPRSN. The chain crosses the membrane as a helical span at residues 232 to 252; it reads LAITYLCSVFAISVIYLLCIL. Over 253-330 the chain is Extracellular; the sequence is RRSVSGLKET…SQRAKVWSMR (78 aa). The chain crosses the membrane as a helical span at residues 331–351; that stretch reads ALLNVLVLALLGAAFYGIYWA. The Cytoplasmic segment spans residues 352 to 376; the sequence is TEYTLTLQETPLVRQTPLFKLLVDY. The helical transmembrane segment at 377–397 threads the bilayer; sequence LPSIFISLFNFVLPPVFKFIA. Topologically, residues 398–407 are extracellular; that stretch reads SLEGYTQSRQ. The helical transmembrane segment at 408 to 428 threads the bilayer; it reads IVLILLRTVFLRLASLVFLLV. Topologically, residues 429-465 are cytoplasmic; that stretch reads SLWSQITCGGNMEAEGCKACGYNYKEIPCWETRLGQE. A helical membrane pass occupies residues 466-486; it reads MYKLVLFDLLMGLLVTLLVQF. Residues 487–513 lie on the Extracellular side of the membrane; it reads PRKILCGLCPGALGRLSGTLEFQVPDE. A helical membrane pass occupies residues 514 to 534; that stretch reads VLGLIYAQTVVWVGSFFCPLL. Position 535 (P535) is a topological domain, cytoplasmic. A helical membrane pass occupies residues 536–556; that stretch reads LINTAKFLILFCLKKITLFSI. The Extracellular portion of the chain corresponds to 557–574; the sequence is YSPASRTFRASTANFFFP. A helical transmembrane segment spans residues 575-595; the sequence is LVLLVGLAISAVPVLYSIFLI. At 596 to 635 the chain is on the cytoplasmic side; it reads PPSKLCGPFRGKLSIWAQIPEAIESLPQTAQNFLYFLGTQ. A helical transmembrane segment spans residues 636-656; sequence AFTVPLLILSSILMMYTVALA. At 657 to 694 the chain is on the extracellular side; it reads NCYGRLISELKRQIETEVQNKVFLAQRAVALSSRNGTS. A glycan (N-linked (GlcNAc...) asparagine) is linked at N691.

The protein belongs to the TMC family. As to expression, expressed in taste bud cells of the posterior tongue. Ubiquitously expressed.

It is found in the membrane. The catalysed reaction is chloride(in) = chloride(out). Voltage-gated chloride channel involved in high-concentration salt taste sensation. Depolarization induced by high NaCl concentration may trigger the activation of TMC4-mediated chloride influx into taste bud cells, helping the return to resting potential. Also allows permeation of organic anions including gluconate, but their current amplitudes at positive potentials are less than that of chloride. Involved in pH and temperature-dependent modulation of salty taste. This is Voltage-gated chloride channel TMC4 from Mus musculus (Mouse).